Here is a 181-residue protein sequence, read N- to C-terminus: Bifunctional protein PyrR (181 aa).

The PRPP-binding motif lies at 100-112 (VVLVDDVIYTGRT).

Belongs to the purine/pyrimidine phosphoribosyltransferase family. PyrR subfamily. Homodimer and homohexamer; in equilibrium.

The catalysed reaction is UMP + diphosphate = 5-phospho-alpha-D-ribose 1-diphosphate + uracil. Its function is as follows. Regulates transcriptional attenuation of the pyrimidine nucleotide (pyr) operon by binding in a uridine-dependent manner to specific sites on pyr mRNA. This disrupts an antiterminator hairpin in the RNA and favors formation of a downstream transcription terminator, leading to a reduced expression of downstream genes. Also displays a weak uracil phosphoribosyltransferase activity which is not physiologically significant. This chain is Bifunctional protein PyrR, found in Pelotomaculum thermopropionicum (strain DSM 13744 / JCM 10971 / SI).